Here is a 141-residue protein sequence, read N- to C-terminus: Large ribosomal subunit protein uL16 (141 aa).

The segment at 1–23 is disordered; sequence MLMPKRTKYRKQMKGRNRGKAHR.

Belongs to the universal ribosomal protein uL16 family. In terms of assembly, part of the 50S ribosomal subunit.

Its function is as follows. Binds 23S rRNA and is also seen to make contacts with the A and possibly P site tRNAs. The sequence is that of Large ribosomal subunit protein uL16 from Helicobacter pylori (strain P12).